The following is a 92-amino-acid chain: ATP synthase subunit c (92 aa).

Helical transmembrane passes span 20–40 and 71–91; these read GAGL…GTGL and MAIS…LVFV.

It belongs to the ATPase C chain family. In terms of assembly, F-type ATPases have 2 components, F(1) - the catalytic core - and F(0) - the membrane proton channel. F(1) has five subunits: alpha(3), beta(3), gamma(1), delta(1), epsilon(1). F(0) has three main subunits: a(1), b(2) and c(10-14). The alpha and beta chains form an alternating ring which encloses part of the gamma chain. F(1) is attached to F(0) by a central stalk formed by the gamma and epsilon chains, while a peripheral stalk is formed by the delta and b chains.

The protein resides in the cell membrane. Its function is as follows. F(1)F(0) ATP synthase produces ATP from ADP in the presence of a proton or sodium gradient. F-type ATPases consist of two structural domains, F(1) containing the extramembraneous catalytic core and F(0) containing the membrane proton channel, linked together by a central stalk and a peripheral stalk. During catalysis, ATP synthesis in the catalytic domain of F(1) is coupled via a rotary mechanism of the central stalk subunits to proton translocation. Key component of the F(0) channel; it plays a direct role in translocation across the membrane. A homomeric c-ring of between 10-14 subunits forms the central stalk rotor element with the F(1) delta and epsilon subunits. The sequence is that of ATP synthase subunit c from Mycoplasmopsis pulmonis (strain UAB CTIP) (Mycoplasma pulmonis).